Here is a 279-residue protein sequence, read N- to C-terminus: Urease accessory protein UreD (279 aa).

Belongs to the UreD family. As to quaternary structure, ureD, UreF and UreG form a complex that acts as a GTP-hydrolysis-dependent molecular chaperone, activating the urease apoprotein by helping to assemble the nickel containing metallocenter of UreC. The UreE protein probably delivers the nickel.

The protein resides in the cytoplasm. In terms of biological role, required for maturation of urease via the functional incorporation of the urease nickel metallocenter. The protein is Urease accessory protein UreD of Nitrosospira multiformis (strain ATCC 25196 / NCIMB 11849 / C 71).